A 529-amino-acid chain; its full sequence is Bifunctional purine biosynthesis protein PurH (529 aa).

The region spanning Asp3 to Val149 is the MGS-like domain.

The protein belongs to the PurH family.

The enzyme catalyses (6R)-10-formyltetrahydrofolate + 5-amino-1-(5-phospho-beta-D-ribosyl)imidazole-4-carboxamide = 5-formamido-1-(5-phospho-D-ribosyl)imidazole-4-carboxamide + (6S)-5,6,7,8-tetrahydrofolate. The catalysed reaction is IMP + H2O = 5-formamido-1-(5-phospho-D-ribosyl)imidazole-4-carboxamide. It participates in purine metabolism; IMP biosynthesis via de novo pathway; 5-formamido-1-(5-phospho-D-ribosyl)imidazole-4-carboxamide from 5-amino-1-(5-phospho-D-ribosyl)imidazole-4-carboxamide (10-formyl THF route): step 1/1. The protein operates within purine metabolism; IMP biosynthesis via de novo pathway; IMP from 5-formamido-1-(5-phospho-D-ribosyl)imidazole-4-carboxamide: step 1/1. The sequence is that of Bifunctional purine biosynthesis protein PurH from Paracoccus denitrificans (strain Pd 1222).